The sequence spans 721 residues: Protein Hook homolog 2 (721 aa).

Residues 7 to 123 enclose the Calponin-homology (CH) domain; sequence VELCDSLLTW…KMVQLVLGCA (117 aa). Coiled-coil stretches lie at residues 181–425 and 484–659; these read LSED…RCSH and DLQN…EKLI. The disordered stretch occupies residues 696-721; sequence TNARRGQISRSHTLLPRYTDKRQSLS.

This sequence belongs to the hook family. In terms of assembly, interacts with microtubules.

It is found in the cytoplasm. The protein localises to the cytoskeleton. The protein resides in the microtubule organizing center. It localises to the centrosome. Functionally, may function to promote vesicle trafficking and/or fusion. May contribute to the establishment and maintenance of centrosome function. In Xenopus laevis (African clawed frog), this protein is Protein Hook homolog 2 (hook2).